Here is a 263-residue protein sequence, read N- to C-terminus: Endonuclease 8 (263 aa).

Catalysis depends on P2, which acts as the Schiff-base intermediate with DNA. E3 serves as the catalytic Proton donor. Catalysis depends on K53, which acts as the Proton donor; for beta-elimination activity. Residues Q70, R125, and N169 each contribute to the DNA site. The FPG-type zinc finger occupies 229 to 263 (KVFHRDGERCERCGGIIEKTTLSSRPFYWCPGCQH). The active-site Proton donor; for delta-elimination activity is the R253.

It belongs to the FPG family. It depends on Zn(2+) as a cofactor.

The catalysed reaction is 2'-deoxyribonucleotide-(2'-deoxyribose 5'-phosphate)-2'-deoxyribonucleotide-DNA = a 3'-end 2'-deoxyribonucleotide-(2,3-dehydro-2,3-deoxyribose 5'-phosphate)-DNA + a 5'-end 5'-phospho-2'-deoxyribonucleoside-DNA + H(+). Involved in base excision repair of DNA damaged by oxidation or by mutagenic agents. Acts as a DNA glycosylase that recognizes and removes damaged bases. Has a preference for oxidized pyrimidines, such as thymine glycol, 5,6-dihydrouracil and 5,6-dihydrothymine. Has AP (apurinic/apyrimidinic) lyase activity and introduces nicks in the DNA strand. Cleaves the DNA backbone by beta-delta elimination to generate a single-strand break at the site of the removed base with both 3'- and 5'-phosphates. The sequence is that of Endonuclease 8 from Klebsiella pneumoniae subsp. pneumoniae (strain ATCC 700721 / MGH 78578).